Reading from the N-terminus, the 119-residue chain is Large ribosomal subunit protein uL18 (119 aa).

Belongs to the universal ribosomal protein uL18 family. In terms of assembly, part of the 50S ribosomal subunit; part of the 5S rRNA/L5/L18/L25 subcomplex. Contacts the 5S and 23S rRNAs.

Functionally, this is one of the proteins that bind and probably mediate the attachment of the 5S RNA into the large ribosomal subunit, where it forms part of the central protuberance. This chain is Large ribosomal subunit protein uL18, found in Staphylococcus aureus (strain Mu3 / ATCC 700698).